The sequence spans 374 residues: Eukaryotic translation initiation factor 3 subunit M (374 aa).

The region spanning 180-339 (EAAKVMVELL…KRVVVSHSTH (160 aa)) is the PCI domain.

The protein belongs to the eIF-3 subunit M family. In terms of assembly, component of the eukaryotic translation initiation factor 3 (eIF-3) complex, which is composed of 13 subunits: eif3a, eif3b, eif3c, eif3d, eif3e, eif3f, eif3g, eif3h, eif3i, eif3j, eif3k, eif3l and eif3m.

Its subcellular location is the cytoplasm. Its function is as follows. Component of the eukaryotic translation initiation factor 3 (eIF-3) complex, which is involved in protein synthesis of a specialized repertoire of mRNAs and, together with other initiation factors, stimulates binding of mRNA and methionyl-tRNAi to the 40S ribosome. The eIF-3 complex specifically targets and initiates translation of a subset of mRNAs involved in cell proliferation. This is Eukaryotic translation initiation factor 3 subunit M (eif3m) from Xenopus tropicalis (Western clawed frog).